The following is an 861-amino-acid chain: Leucine--tRNA ligase (861 aa).

A 'HIGH' region motif is present at residues 42-52; sequence PYPSGKLHMGH. A 'KMSKS' region motif is present at residues 618–622; it reads KMSKS. K621 serves as a coordination point for ATP.

The protein belongs to the class-I aminoacyl-tRNA synthetase family.

It localises to the cytoplasm. The enzyme catalyses tRNA(Leu) + L-leucine + ATP = L-leucyl-tRNA(Leu) + AMP + diphosphate. The chain is Leucine--tRNA ligase from Buchnera aphidicola subsp. Baizongia pistaciae (strain Bp).